The primary structure comprises 113 residues: Large ribosomal subunit protein uL24 (113 aa).

The protein belongs to the universal ribosomal protein uL24 family. Part of the 50S ribosomal subunit.

Functionally, one of two assembly initiator proteins, it binds directly to the 5'-end of the 23S rRNA, where it nucleates assembly of the 50S subunit. In terms of biological role, one of the proteins that surrounds the polypeptide exit tunnel on the outside of the subunit. The protein is Large ribosomal subunit protein uL24 of Rickettsia prowazekii (strain Madrid E).